Consider the following 527-residue polypeptide: Zinc finger C2HC domain-containing protein 1C (527 aa).

2 disordered regions span residues 18–105 and 145–170; these read HNKT…GQGK and VHRKSHSTSDAGADGDQNGYPRLPDS. A compositionally biased stretch (polar residues) spans 50-61; it reads NSFQSKLWSNTE. Residues 71–85 show a composition bias toward basic residues; sequence RPKRNVCTKARRHSC. Residues 93–102 are compositionally biased toward low complexity; sequence QQGSGNNAQG. Residues 207-254 are a coiled coil; the sequence is TQIQRLEAAGESLQKEIRRKEILLQEKLKKTEEGLRRMQKEKKQAIFQ. Disordered regions lie at residues 264-316 and 352-379; these read LPRR…LSDY and LGSTLQESSRSGTPGSSGSSSSTEEPEL. Over residues 286-298 the composition is skewed to basic and acidic residues; the sequence is FRSEVFSRNRGED. The span at 301-312 shows a compositional bias: polar residues; it reads CDQAQENPSPRQ. Low complexity predominate over residues 358 to 374; sequence ESSRSGTPGSSGSSSST. 2 consecutive C2HC/C3H-type zinc fingers follow at residues 378 to 407 and 489 to 518; these read ELAKCSHCGRSFLSLRLQRHSTVCGKMQGS and DYVQCPHCSRHFAPKVAERHIPKCKTIKNR. Cys382, Cys385, His397, Cys401, Cys493, Cys496, His508, and Cys512 together coordinate Zn(2+). Positions 507–527 are disordered; the sequence is RHIPKCKTIKNRPPPPRRHDS.

Belongs to the ZC2HC1 family. It depends on Zn(2+) as a cofactor.

The sequence is that of Zinc finger C2HC domain-containing protein 1C (Zc2hc1c) from Mus musculus (Mouse).